Here is a 251-residue protein sequence, read N- to C-terminus: Capsid protein (251 aa).

Residues 1-27 are disordered; it reads MPKRDLPWRSMPGTSKTSRNANYSPRA. The Bipartite nuclear localization signal signature appears at 3 to 20; it reads KRDLPWRSMPGTSKTSRN. A compositionally biased stretch (polar residues) spans 12–23; the sequence is PGTSKTSRNANY. A Nuclear localization signal motif is present at residues 35-49; that stretch reads KASEWVHRPMYRKPR. Residues 63–80 fold into a zinc finger; that stretch reads CEGPCKVQSYEQRHDISH. A Nuclear export signal motif is present at residues 96–117; it reads ITHRVGKRFCVKSVYILGKIWM. Residues 195–242 carry the Bipartite nuclear localization signal motif; it reads KRFWKVNNHVVYNHQEAGKYENHTENALLLYMACTHASNPVYATLKIR.

The protein belongs to the geminiviridae capsid protein family. Homomultimer. Binds to single-stranded and double-stranded viral DNA. Interacts (via nuclear localization signals) with host importin alpha-1a.

The protein resides in the virion. It localises to the host nucleus. Functionally, encapsidates the viral DNA into characteristic twinned ('geminate') particles. Binds the genomic viral ssDNA and shuttles it into and out of the cell nucleus. The CP of bipartite geminiviruses is not required for cell-to-cell or systemic movement. The polypeptide is Capsid protein (Abutilon (Upland cotton)).